We begin with the raw amino-acid sequence, 262 residues long: Phosphate import ATP-binding protein PstB (262 aa).

Residues 16–257 (MEARHLSVRY…PSEQRTEDYV (242 aa)) form the ABC transporter domain. Position 48-55 (48-55 (GPSGCGKS)) interacts with ATP.

This sequence belongs to the ABC transporter superfamily. Phosphate importer (TC 3.A.1.7) family. As to quaternary structure, the complex is composed of two ATP-binding proteins (PstB), two transmembrane proteins (PstC and PstA) and a solute-binding protein (PstS).

It is found in the cell inner membrane. It carries out the reaction phosphate(out) + ATP + H2O = ADP + 2 phosphate(in) + H(+). Functionally, part of the ABC transporter complex PstSACB involved in phosphate import. Responsible for energy coupling to the transport system. The protein is Phosphate import ATP-binding protein PstB of Anaeromyxobacter dehalogenans (strain 2CP-C).